A 134-amino-acid chain; its full sequence is Methylmalonyl-CoA decarboxylase subunit gamma (134 aa).

The segment covering 28-38 (APAARPAAAPA) has biased composition (low complexity). Positions 28–67 (APAARPAAAPAPAAPKPAAAPAPAPAPKTTAAGAGAGANT) are disordered. A compositionally biased stretch (pro residues) spans 39–53 (PAAPKPAAAPAPAPA). Positions 54-67 (PKTTAAGAGAGANT) are enriched in low complexity. Positions 58–134 (AAGAGAGANT…NAGDILVVLS (77 aa)) constitute a Biotinyl-binding domain. At Lys100 the chain carries N6-biotinyllysine.

The methylmalonyl-CoA decarboxylase is composed of four subunits: the carboxyltransferase alpha subunit (MmdA), the tunnel beta subunit (MmdB), the biotin-containing gamma subunit (MmdC) and the delta subunit (MmdD). Requires biotin as cofactor.

The protein resides in the cell membrane. The catalysed reaction is (S)-methylmalonyl-CoA + Na(+)(in) + H(+)(out) = propanoyl-CoA + Na(+)(out) + CO2. Its function is as follows. Biotin-containing subunit of the sodium ion pump methylmalonyl-CoA decarboxylase, which converts the chemical energy of a decarboxylation reaction into an electrochemical gradient of Na(+) ions across the cytoplasmic membrane, thereby creating a sodium ion motive force that is used for ATP synthesis. The protein is Methylmalonyl-CoA decarboxylase subunit gamma of Propionigenium modestum.